The following is a 134-amino-acid chain: Small ribosomal subunit protein bS16 (134 aa).

The segment at 105-134 is disordered; it reads QNERREKRLAIKTRRRQAKKAAEAEGQESA. A compositionally biased stretch (basic residues) spans 114 to 123; that stretch reads AIKTRRRQAK.

Belongs to the bacterial ribosomal protein bS16 family.

The sequence is that of Small ribosomal subunit protein bS16 from Chlorobium phaeobacteroides (strain BS1).